The sequence spans 122 residues: Acidic phospholipase A2 BpirPLA2-I (122 aa).

Disulfide bonds link Cys26–Cys115, Cys28–Cys44, Cys43–Cys95, Cys49–Cys122, Cys50–Cys88, Cys57–Cys81, and Cys75–Cys86. Residues Tyr27, Gly29, and Gly31 each coordinate Ca(2+). His47 is a catalytic residue. Asp48 contributes to the Ca(2+) binding site. The active site involves Asp89. An Antiplatelet activity motif is present at residues 105–117 (IKYWFYGAKNCQE).

It belongs to the phospholipase A2 family. Group II subfamily. D49 sub-subfamily. Requires Ca(2+) as cofactor. Expressed by the venom gland.

It localises to the secreted. It catalyses the reaction a 1,2-diacyl-sn-glycero-3-phosphocholine + H2O = a 1-acyl-sn-glycero-3-phosphocholine + a fatty acid + H(+). With respect to regulation, inhibited by EDTA and p-bromophenacyl bromide (BPB). In terms of biological role, snake venom phospholipase A2 (PLA2) that inhibits collagen/ADP-induced platelet aggregation, and induces hypotension in rats (activity abolished in the presence of p-bromophenacyl bromide). PLA2 catalyzes the calcium-dependent hydrolysis of the 2-acyl groups in 3-sn-phosphoglycerides. The sequence is that of Acidic phospholipase A2 BpirPLA2-I from Bothrops pirajai (Piraja's lancehead).